The following is a 97-amino-acid chain: Ferredoxin-3 (97 aa).

4Fe-4S ferredoxin-type domains lie at 18 to 47 (FAES…LKAL) and 65 to 95 (KVMV…HNPL). [4Fe-4S] cluster-binding residues include C27, C30, C33, C37, C75, C78, C81, and C85.

As to quaternary structure, homodimer. [4Fe-4S] cluster serves as cofactor.

Functionally, ferredoxins are iron-sulfur proteins that transfer electrons in a wide variety of metabolic reactions. In Nostoc sp. (strain PCC 7120 / SAG 25.82 / UTEX 2576), this protein is Ferredoxin-3 (fdxB).